A 152-amino-acid chain; its full sequence is D-erythrulose-4-phosphate isomerase 2 (152 aa).

Cysteine 70 functions as the Proton acceptor in the catalytic mechanism.

This sequence belongs to the LacAB/RpiB family.

It catalyses the reaction D-erythrulose 4-phosphate = D-erythrose 4-phosphate. Its pathway is carbohydrate metabolism; erythritol degradation. The protein operates within carbohydrate metabolism; D-threitol degradation. It functions in the pathway carbohydrate metabolism; L-threitol degradation. Functionally, catalyzes the isomerization of D-erythrulose-4P to D-erythrose-4P. Involved in the degradation pathways of L-threitol, D-threitol and erythritol, that allow M.smegmatis to grow on these compounds as the sole carbon source. The polypeptide is D-erythrulose-4-phosphate isomerase 2 (Mycolicibacterium smegmatis (strain ATCC 700084 / mc(2)155) (Mycobacterium smegmatis)).